Consider the following 188-residue polypeptide: dCTP deaminase (188 aa).

DCTP is bound by residues 111 to 116, 135 to 137, Gln156, Tyr170, and Gln180; these read KSTYAR and TLE. Residue Glu137 is the Proton donor/acceptor of the active site.

This sequence belongs to the dCTP deaminase family. In terms of assembly, homotrimer.

It catalyses the reaction dCTP + H2O + H(+) = dUTP + NH4(+). It participates in pyrimidine metabolism; dUMP biosynthesis; dUMP from dCTP (dUTP route): step 1/2. Its function is as follows. Catalyzes the deamination of dCTP to dUTP. The sequence is that of dCTP deaminase from Pseudomonas putida (strain ATCC 700007 / DSM 6899 / JCM 31910 / BCRC 17059 / LMG 24140 / F1).